Reading from the N-terminus, the 977-residue chain is Alanine--tRNA ligase (977 aa).

Residues 512–535 are disordered; the sequence is SQVDSKLQSSTPAGTGSYDSKQVS. 4 residues coordinate Zn(2+): H618, H622, C720, and H724.

It belongs to the class-II aminoacyl-tRNA synthetase family. Zn(2+) serves as cofactor.

The protein resides in the cytoplasm. It carries out the reaction tRNA(Ala) + L-alanine + ATP = L-alanyl-tRNA(Ala) + AMP + diphosphate. Functionally, catalyzes the attachment of alanine to tRNA(Ala) in a two-step reaction: alanine is first activated by ATP to form Ala-AMP and then transferred to the acceptor end of tRNA(Ala). Also edits incorrectly charged Ser-tRNA(Ala) and Gly-tRNA(Ala) via its editing domain. The sequence is that of Alanine--tRNA ligase from Leptospira interrogans serogroup Icterohaemorrhagiae serovar Lai (strain 56601).